We begin with the raw amino-acid sequence, 428 residues long: Serine--tRNA ligase (428 aa).

231–233 is a binding site for L-serine; the sequence is TAE. Residues 262-264 and Val278 contribute to the ATP site; that span reads RRE. Position 285 (Glu285) interacts with L-serine. Residue 349 to 352 coordinates ATP; that stretch reads EVSS. Ser384 contributes to the L-serine binding site.

This sequence belongs to the class-II aminoacyl-tRNA synthetase family. Type-1 seryl-tRNA synthetase subfamily. In terms of assembly, homodimer. The tRNA molecule binds across the dimer.

It is found in the cytoplasm. It catalyses the reaction tRNA(Ser) + L-serine + ATP = L-seryl-tRNA(Ser) + AMP + diphosphate + H(+). The catalysed reaction is tRNA(Sec) + L-serine + ATP = L-seryl-tRNA(Sec) + AMP + diphosphate + H(+). It functions in the pathway aminoacyl-tRNA biosynthesis; selenocysteinyl-tRNA(Sec) biosynthesis; L-seryl-tRNA(Sec) from L-serine and tRNA(Sec): step 1/1. Catalyzes the attachment of serine to tRNA(Ser). Is also able to aminoacylate tRNA(Sec) with serine, to form the misacylated tRNA L-seryl-tRNA(Sec), which will be further converted into selenocysteinyl-tRNA(Sec). The polypeptide is Serine--tRNA ligase (Chlamydia muridarum (strain MoPn / Nigg)).